We begin with the raw amino-acid sequence, 315 residues long: AT-hook motif nuclear-localized protein 19 (315 aa).

Positions 1–25 (MANPWWTGQVNLSGLETTPPGSSQL) are enriched in polar residues. 2 disordered regions span residues 1 to 104 (MANP…RDSP) and 239 to 285 (EEEA…YNMP). Positions 61 to 74 (DNLSGDDHEPREGA) are enriched in basic and acidic residues. Residues 80 to 92 (RRPRGRPAGSKNK) constitute a DNA-binding region (a.T hook). One can recognise a PPC domain in the interval 104 to 248 (PNALKSHVME…EEEAAERGGG (145 aa)). Over residues 245 to 276 (RGGGGGSGGVVPGQLGGGGSPLSSGAGGGDGN) the composition is skewed to gly residues.

As to expression, slightly expressed in roots.

It localises to the nucleus. Functionally, transcription factor that specifically binds AT-rich DNA sequences related to the nuclear matrix attachment regions (MARs). Negatively regulates plant innate immunity (PTI) to pathogens through the down-regulation of the PAMP-triggered FRK1 expression. Positively regulates defense against fungal Verticillium infection. The protein is AT-hook motif nuclear-localized protein 19 of Arabidopsis thaliana (Mouse-ear cress).